The primary structure comprises 210 residues: HTH-type transcriptional repressor FabR (210 aa).

The region spanning 10-70 is the HTH tetR-type domain; that stretch reads KTRRSLVEAA…TMVDESGLML (61 aa). The segment at residues 33-52 is a DNA-binding region (H-T-H motif); sequence SLREVAREAGIAPTSFYRHF.

Homodimer.

It is found in the cytoplasm. Its function is as follows. Represses the transcription of fabB, involved in unsaturated fatty acid (UFA) biosynthesis. By controlling UFA production, FabR directly influences the physical properties of the membrane bilayer. This is HTH-type transcriptional repressor FabR from Salmonella paratyphi A (strain ATCC 9150 / SARB42).